Reading from the N-terminus, the 489-residue chain is Argininosuccinate lyase (489 aa).

The tract at residues 462 to 489 (QARYQQTEPAEEPPLPPSSPGSGLPLES) is disordered.

It belongs to the lyase 1 family. Argininosuccinate lyase subfamily.

It is found in the cytoplasm. The catalysed reaction is 2-(N(omega)-L-arginino)succinate = fumarate + L-arginine. It functions in the pathway amino-acid biosynthesis; L-arginine biosynthesis; L-arginine from L-ornithine and carbamoyl phosphate: step 3/3. In Synechococcus sp. (strain JA-3-3Ab) (Cyanobacteria bacterium Yellowstone A-Prime), this protein is Argininosuccinate lyase.